The sequence spans 485 residues: GlcNAc-binding protein A (485 aa).

An N-terminal signal peptide occupies residues 1–23; the sequence is MKKQPKMTAIALILSGISGLAYG. Residues 24-201 enclose the Chitin-binding type-4 domain; sequence HGYVSAVENG…SFYNVIDVKF (178 aa). A Chitin-binding type-3 domain is found at 437–478; that stretch reads AGTKVLASDGAIYQCKPWPYSGYCQQWTSNATQYQPGTGSHW.

It belongs to the GbpA family.

It is found in the secreted. In terms of biological role, probably interacts with GlcNAc residues. May promote attachment to both epithelial cell surfaces and chitin. The polypeptide is GlcNAc-binding protein A (Vibrio cholerae serotype O1 (strain ATCC 39541 / Classical Ogawa 395 / O395)).